Here is an 86-residue protein sequence, read N- to C-terminus: MNSLLIITACLVLIGTVWAKDGYLVDVKGCKKNCYKLGENDYCNRECKMKHRGGSYGYCYGFGCYCEGLSDSTPTWPLPNKRCGGK.

The N-terminal stretch at 1-19 is a signal peptide; it reads MNSLLIITACLVLIGTVWA. The region spanning 20-84 is the LCN-type CS-alpha/beta domain; that stretch reads KDGYLVDVKG…TWPLPNKRCG (65 aa). 4 disulfides stabilise this stretch: C30–C83, C34–C59, C43–C64, and C47–C66.

The protein belongs to the long (4 C-C) scorpion toxin superfamily. Sodium channel inhibitor family. Beta subfamily. Expressed by the venom gland.

The protein resides in the secreted. Beta toxins bind voltage-independently at site-4 of sodium channels (Nav) and shift the voltage of activation toward more negative potentials thereby affecting sodium channel activation and promoting spontaneous and repetitive firing. The chain is Toxin CngtIV from Centruroides noxius (Mexican scorpion).